We begin with the raw amino-acid sequence, 121 residues long: Large ribosomal subunit protein uL18 (121 aa).

The protein belongs to the universal ribosomal protein uL18 family. Part of the 50S ribosomal subunit; part of the 5S rRNA/L5/L18/L25 subcomplex. Contacts the 5S and 23S rRNAs.

This is one of the proteins that bind and probably mediate the attachment of the 5S RNA into the large ribosomal subunit, where it forms part of the central protuberance. In Dehalococcoides mccartyi (strain ATCC BAA-2266 / KCTC 15142 / 195) (Dehalococcoides ethenogenes (strain 195)), this protein is Large ribosomal subunit protein uL18.